Here is a 361-residue protein sequence, read N- to C-terminus: Phenylalanine--tRNA ligase alpha subunit (361 aa).

Mg(2+) is bound at residue Glu-260.

It belongs to the class-II aminoacyl-tRNA synthetase family. Phe-tRNA synthetase alpha subunit type 1 subfamily. In terms of assembly, tetramer of two alpha and two beta subunits. Requires Mg(2+) as cofactor.

Its subcellular location is the cytoplasm. The enzyme catalyses tRNA(Phe) + L-phenylalanine + ATP = L-phenylalanyl-tRNA(Phe) + AMP + diphosphate + H(+). This Bartonella quintana (strain Toulouse) (Rochalimaea quintana) protein is Phenylalanine--tRNA ligase alpha subunit.